The primary structure comprises 169 residues: 6,7-dimethyl-8-ribityllumazine synthase (169 aa).

5-amino-6-(D-ribitylamino)uracil contacts are provided by residues tryptophan 27, 61–63, and 90–92; these read SYE and VLI. 95 to 96 serves as a coordination point for (2S)-2-hydroxy-3-oxobutyl phosphate; it reads ST. The Proton donor role is filled by histidine 98. Phenylalanine 123 is a 5-amino-6-(D-ribitylamino)uracil binding site. (2S)-2-hydroxy-3-oxobutyl phosphate is bound at residue arginine 137.

Belongs to the DMRL synthase family. Homopentamer.

The protein resides in the mitochondrion intermembrane space. It carries out the reaction (2S)-2-hydroxy-3-oxobutyl phosphate + 5-amino-6-(D-ribitylamino)uracil = 6,7-dimethyl-8-(1-D-ribityl)lumazine + phosphate + 2 H2O + H(+). It functions in the pathway cofactor biosynthesis; riboflavin biosynthesis; riboflavin from 2-hydroxy-3-oxobutyl phosphate and 5-amino-6-(D-ribitylamino)uracil: step 1/2. Its function is as follows. Catalyzes the formation of 6,7-dimethyl-8-ribityllumazine by condensation of 5-amino-6-(D-ribitylamino)uracil with 3,4-dihydroxy-2-butanone 4-phosphate. This is the penultimate step in the biosynthesis of riboflavin. The polypeptide is 6,7-dimethyl-8-ribityllumazine synthase (RIB4) (Saccharomyces cerevisiae (strain ATCC 204508 / S288c) (Baker's yeast)).